The chain runs to 577 residues: Dihydroxy-acid dehydratase (577 aa).

Basic and acidic residues predominate over residues 1–10 (MLKRSFDKSK). The interval 1 to 22 (MLKRSFDKSKLPSRHVTEGPSR) is disordered. C56 contacts [2Fe-2S] cluster. Position 88 (D88) interacts with Mg(2+). Residue C129 participates in [2Fe-2S] cluster binding. The Mg(2+) site is built by D130 and K131. K131 carries the post-translational modification N6-carboxylysine. C201 is a binding site for [2Fe-2S] cluster. E453 contacts Mg(2+). Residue S479 is the Proton acceptor of the active site.

This sequence belongs to the IlvD/Edd family. As to quaternary structure, homodimer. It depends on [2Fe-2S] cluster as a cofactor. Mg(2+) is required as a cofactor.

The catalysed reaction is (2R)-2,3-dihydroxy-3-methylbutanoate = 3-methyl-2-oxobutanoate + H2O. It catalyses the reaction (2R,3R)-2,3-dihydroxy-3-methylpentanoate = (S)-3-methyl-2-oxopentanoate + H2O. The protein operates within amino-acid biosynthesis; L-isoleucine biosynthesis; L-isoleucine from 2-oxobutanoate: step 3/4. It functions in the pathway amino-acid biosynthesis; L-valine biosynthesis; L-valine from pyruvate: step 3/4. In terms of biological role, functions in the biosynthesis of branched-chain amino acids. Catalyzes the dehydration of (2R,3R)-2,3-dihydroxy-3-methylpentanoate (2,3-dihydroxy-3-methylvalerate) into 2-oxo-3-methylpentanoate (2-oxo-3-methylvalerate) and of (2R)-2,3-dihydroxy-3-methylbutanoate (2,3-dihydroxyisovalerate) into 2-oxo-3-methylbutanoate (2-oxoisovalerate), the penultimate precursor to L-isoleucine and L-valine, respectively. The sequence is that of Dihydroxy-acid dehydratase from Dinoroseobacter shibae (strain DSM 16493 / NCIMB 14021 / DFL 12).